Reading from the N-terminus, the 234-residue chain is LexA repressor (234 aa).

Positions 41-61 form a DNA-binding region, H-T-H motif; that stretch reads RAEIANELGFKSANAAEEHLQ. Active-site for autocatalytic cleavage activity residues include S152 and K189.

The protein belongs to the peptidase S24 family. In terms of assembly, homodimer.

It carries out the reaction Hydrolysis of Ala-|-Gly bond in repressor LexA.. Functionally, represses a number of genes involved in the response to DNA damage (SOS response), including recA and lexA. In the presence of single-stranded DNA, RecA interacts with LexA causing an autocatalytic cleavage which disrupts the DNA-binding part of LexA, leading to derepression of the SOS regulon and eventually DNA repair. This is LexA repressor from Polaromonas sp. (strain JS666 / ATCC BAA-500).